Here is a 384-residue protein sequence, read N- to C-terminus: Outer membrane protein assembly factor BamC (384 aa).

An N-terminal signal peptide occupies residues 1 to 23 (MNKLNSVVVARGAVAVLLIGLAG). Cys24 carries the N-palmitoyl cysteine lipid modification. Cys24 carries S-diacylglycerol cysteine lipidation. Disordered stretches follow at residues 47 to 70 (LEVP…TSGK) and 251 to 273 (QAAQ…SGTL).

It belongs to the BamC family. Part of the Bam complex.

The protein localises to the cell outer membrane. Part of the outer membrane protein assembly complex, which is involved in assembly and insertion of beta-barrel proteins into the outer membrane. The sequence is that of Outer membrane protein assembly factor BamC from Accumulibacter regalis.